Reading from the N-terminus, the 509-residue chain is Aspartyl/glutamyl-tRNA(Asn/Gln) amidotransferase subunit B (509 aa).

The protein belongs to the GatB/GatE family. GatB subfamily. Heterotrimer of A, B and C subunits.

The enzyme catalyses L-glutamyl-tRNA(Gln) + L-glutamine + ATP + H2O = L-glutaminyl-tRNA(Gln) + L-glutamate + ADP + phosphate + H(+). It catalyses the reaction L-aspartyl-tRNA(Asn) + L-glutamine + ATP + H2O = L-asparaginyl-tRNA(Asn) + L-glutamate + ADP + phosphate + 2 H(+). Its function is as follows. Allows the formation of correctly charged Asn-tRNA(Asn) or Gln-tRNA(Gln) through the transamidation of misacylated Asp-tRNA(Asn) or Glu-tRNA(Gln) in organisms which lack either or both of asparaginyl-tRNA or glutaminyl-tRNA synthetases. The reaction takes place in the presence of glutamine and ATP through an activated phospho-Asp-tRNA(Asn) or phospho-Glu-tRNA(Gln). The polypeptide is Aspartyl/glutamyl-tRNA(Asn/Gln) amidotransferase subunit B (Psychrobacter arcticus (strain DSM 17307 / VKM B-2377 / 273-4)).